Reading from the N-terminus, the 335-residue chain is Terpene synthase 4 (335 aa).

Positions aspartate 103–glutamate 108 match the DDxx(x)D/E motif motif. Positions asparagine 243 to glutamate 251 match the NDxxSxxxD/E motif motif.

It belongs to the terpene synthase family.

It carries out the reaction (2E,6E)-farnesyl diphosphate + H2O = (6E)-nerolidol + diphosphate. In terms of biological role, terpene synthase that converts its substrate farnesyl diphosphate (FPP) into the sesquiterpene (E)-nerolidol. This is Terpene synthase 4 from Dictyostelium discoideum (Social amoeba).